The chain runs to 88 residues: Small ribosomal subunit protein bS16c (88 aa).

Belongs to the bacterial ribosomal protein bS16 family.

It is found in the plastid. The protein localises to the chloroplast. This is Small ribosomal subunit protein bS16c from Lactuca sativa (Garden lettuce).